Reading from the N-terminus, the 450-residue chain is Nuclear hormone receptor family member nhr-40 (450 aa).

Positions 28-103 (GTLCVVCSDF…MGMDPKAIQH (76 aa)) form a DNA-binding region, nuclear receptor. 2 NR C4-type zinc fingers span residues 31–51 (CVVC…CNGC) and 67–91 (CQFS…LKKC). One can recognise an NR LBD domain in the interval 173-450 (DVKAVIEDLL…LIDQLIIVGL (278 aa)).

Belongs to the nuclear hormone receptor family. In terms of tissue distribution, isoform b: Expressed in body wall muscle cells, pharyngeal muscles, rectal gland cells, vulval and uterine muscles and neurons in the head and ventral nerve cord. Isoform c: Expressed in body wall muscle cells, neurons in the head, nerve ring, ventral and dorsal nerve cords and epidermal cells in the tail.

The protein resides in the nucleus. In terms of biological role, orphan nuclear receptor. Plays a role in morphogenesis and elongation during embryonic and larval development. Plays a role in muscle formation and motility. The protein is Nuclear hormone receptor family member nhr-40 of Caenorhabditis elegans.